Reading from the N-terminus, the 440-residue chain is Thymidine phosphorylase (440 aa).

It belongs to the thymidine/pyrimidine-nucleoside phosphorylase family. In terms of assembly, homodimer.

It carries out the reaction thymidine + phosphate = 2-deoxy-alpha-D-ribose 1-phosphate + thymine. The protein operates within pyrimidine metabolism; dTMP biosynthesis via salvage pathway; dTMP from thymine: step 1/2. In terms of biological role, the enzymes which catalyze the reversible phosphorolysis of pyrimidine nucleosides are involved in the degradation of these compounds and in their utilization as carbon and energy sources, or in the rescue of pyrimidine bases for nucleotide synthesis. The sequence is that of Thymidine phosphorylase from Salmonella choleraesuis (strain SC-B67).